Consider the following 913-residue polypeptide: Eukaryotic translation initiation factor 3 subunit C (913 aa).

A disordered region spans residues 1-44 (MSRFFTTGSDSESESSLSGEELVTKPVGGNYGKQPLLLSEDEED). Over residues 8 to 21 (GSDSESESSLSGEE) the composition is skewed to low complexity. Residues Ser-9, Ser-11, Ser-13, Ser-15, Ser-16, Ser-18, and Ser-39 each carry the phosphoserine modification. Lys-99 carries the post-translational modification N6-acetyllysine. Disordered stretches follow at residues 157–301 (TSYK…GGEW) and 522–542 (QLTPPEGSSKSEQDQAENEGE). Phosphoserine occurs at positions 166, 178, 181, and 182. The span at 166-190 (SADEDAEKNEEDSEGSSDEDEDEDG) shows a compositional bias: acidic residues. Residues 199 to 216 (KKSEAPSGESRKFLKKMD) are compositionally biased toward basic and acidic residues. The segment covering 217 to 232 (DEDEDSEDSEDDEDWD) has biased composition (acidic residues). Residues 261–278 (PTTDEDKKAAEKKREDKA) show a composition bias toward basic and acidic residues. Positions 522–531 (QLTPPEGSSK) are enriched in polar residues. Thr-524 bears the Phosphothreonine mark. At Lys-643 the chain carries N6-acetyllysine. The 177-residue stretch at 673–849 (FHLHINLELL…QTVVMHRTEP (177 aa)) folds into the PCI domain. The disordered stretch occupies residues 885-913 (FRDQKDGYRKNEGYMRRGGYRQQQSQTAY). The segment covering 886–899 (RDQKDGYRKNEGYM) has biased composition (basic and acidic residues). Ser-909 bears the Phosphoserine mark.

This sequence belongs to the eIF-3 subunit C family. In terms of assembly, component of the eukaryotic translation initiation factor 3 (eIF-3) complex, which is composed of 13 subunits: EIF3A, EIF3B, EIF3C, EIF3D, EIF3E, EIF3F, EIF3G, EIF3H, EIF3I, EIF3J, EIF3K, EIF3L and EIF3M. The eIF-3 complex appears to include 3 stable modules: module A is composed of EIF3A, EIF3B, EIF3G and EIF3I; module B is composed of EIF3F, EIF3H, and EIF3M; and module C is composed of EIF3C, EIF3D, EIF3E, EIF3K and EIF3L. EIF3C of module C binds EIF3B of module A and EIF3H of module B, thereby linking the three modules. EIF3J is a labile subunit that binds to the eIF-3 complex via EIF3B. The eIF-3 complex interacts with RPS6KB1 under conditions of nutrient depletion. Mitogenic stimulation leads to binding and activation of a complex composed of MTOR and RPTOR, leading to phosphorylation and release of RPS6KB1 and binding of EIF4B to eIF-3. Interacts with ALKBH4, IFIT1 and IFIT2. Interacts with BZW2/5MP1. Phosphorylated. Phosphorylation is enhanced upon serum stimulation.

It localises to the cytoplasm. In terms of biological role, component of the eukaryotic translation initiation factor 3 (eIF-3) complex, which is required for several steps in the initiation of protein synthesis. The eIF-3 complex associates with the 40S ribosome and facilitates the recruitment of eIF-1, eIF-1A, eIF-2:GTP:methionyl-tRNAi and eIF-5 to form the 43S pre-initiation complex (43S PIC). The eIF-3 complex stimulates mRNA recruitment to the 43S PIC and scanning of the mRNA for AUG recognition. The eIF-3 complex is also required for disassembly and recycling of post-termination ribosomal complexes and subsequently prevents premature joining of the 40S and 60S ribosomal subunits prior to initiation. The eIF-3 complex specifically targets and initiates translation of a subset of mRNAs involved in cell proliferation, including cell cycling, differentiation and apoptosis, and uses different modes of RNA stem-loop binding to exert either translational activation or repression. The chain is Eukaryotic translation initiation factor 3 subunit C from Pongo abelii (Sumatran orangutan).